We begin with the raw amino-acid sequence, 422 residues long: Receptor homology region, transmembrane domain- and RING domain-containing protein 3 (422 aa).

A signal peptide spans 1–22; sequence MNLVVLLILTLLLFIVSYVVDA. Over 23–168 the chain is Lumenal; the sequence is GQVILVDSNI…NTEDSVWSLY (146 aa). N-linked (GlcNAc...) asparagine glycosylation is present at asparagine 31. An intrachain disulfide couples cysteine 64 to cysteine 89. Residues 81–146 enclose the PA domain; that stretch reads LVLIIRGGCS…RAGEMLKKYA (66 aa). A helical transmembrane segment spans residues 169-189; that stretch reads ASIALILSLAIFCVMVTCVFF. At 190 to 422 the chain is on the cytoplasmic side; sequence YRYCSTIRNS…HFASAHSLPD (233 aa). Residues 232 to 274 form an RING-type; atypical zinc finger; the sequence is CAICLEDYIVGDKLRVLPCSHKFHVACVDSWLISWRTFCPVCK. The interval 344-368 is disordered; that stretch reads LRRQASPLQSSSQRSHLSMKSSHSL. The segment covering 349 to 368 has biased composition (polar residues); the sequence is SPLQSSSQRSHLSMKSSHSL.

It is found in the prevacuolar compartment membrane. Its subcellular location is the protein storage vacuole membrane. Involved in the trafficking of vacuolar proteins. May function as a sorting receptor for protein trafficking to the protein storage vacuole (PSV). This Arabidopsis thaliana (Mouse-ear cress) protein is Receptor homology region, transmembrane domain- and RING domain-containing protein 3 (RMR3).